The primary structure comprises 677 residues: MIQTHSEVKRVEELRRLLQQASYAYYVSDAPIMEDAVYDQLYRELQQLEIQHPELVTPDSPTQRIGERPATQFLSVRHNIPLYSLENAFNVEELQAWDQRWRRQVAPTEAEYVAELKIDGSAIALTYQNGILVRGATRGDGVTGEDITQNVRTIRSIPLRLNFDGIEKVEKVEVRGEAFLPLEVFKQINEERQKAGEQLFANPRNAAAGTLRQLDSRIVARRRLDFFAYTLHISGMDDASIANTQWEALELLQKMGFRVNPNHKLCQSLAEVADYYKYWDTERLNLPYMTDGVVLKLNSFKLQEQLGFTQRFPRWAVALKYPAEEAPTRVENIAVNVGRTGALTPLAQMRPVQLAGTTVSRATLHNSDRIAQLDIRIGDTVIVRKAGEIIPEVVRVIKELRPADTQPFIMPTHCPVCGQPVVRETGEAVTRCVNASCPAILKGSIEHWVSRDALDIKGVGEKLVYQLVDKGLVHSVADLYDLTTERLFALERMGEKSAQKLIEAIAQSKNQPWSRVLYGLGIRHVGSVNAQLLSEKYRAVAELSSAKQSDIEGIYGIGAEIAQSVYQWFRINANQSLIERLQAAGLKLANTEEIPVMNNGILKLNGKTFVVTGTLPTLKRDEVKALIQKAGGKVTDSVSKKTDYLVVGEDAGSKLEKAQALGIAQLTETQLLEILEE.

NAD(+) is bound by residues Asp35–Asp39, Ser84–Leu85, and Glu115. The active-site N6-AMP-lysine intermediate is Lys117. The NAD(+) site is built by Arg138, Glu177, Lys296, and Lys320. Positions 414, 417, 432, and 437 each coordinate Zn(2+). In terms of domain architecture, BRCT spans Asn599–Glu677.

The protein belongs to the NAD-dependent DNA ligase family. LigA subfamily. It depends on Mg(2+) as a cofactor. Mn(2+) is required as a cofactor.

The enzyme catalyses NAD(+) + (deoxyribonucleotide)n-3'-hydroxyl + 5'-phospho-(deoxyribonucleotide)m = (deoxyribonucleotide)n+m + AMP + beta-nicotinamide D-nucleotide.. DNA ligase that catalyzes the formation of phosphodiester linkages between 5'-phosphoryl and 3'-hydroxyl groups in double-stranded DNA using NAD as a coenzyme and as the energy source for the reaction. It is essential for DNA replication and repair of damaged DNA. This Nostoc sp. (strain PCC 7120 / SAG 25.82 / UTEX 2576) protein is DNA ligase.